A 174-amino-acid chain; its full sequence is ATP synthase subunit b (174 aa).

Residues 9–29 (LPNTSLIFWEVVTFLILLALL) traverse the membrane as a helical segment.

The protein belongs to the ATPase B chain family. F-type ATPases have 2 components, F(1) - the catalytic core - and F(0) - the membrane proton channel. F(1) has five subunits: alpha(3), beta(3), gamma(1), delta(1), epsilon(1). F(0) has three main subunits: a(1), b(2) and c(10-14). The alpha and beta chains form an alternating ring which encloses part of the gamma chain. F(1) is attached to F(0) by a central stalk formed by the gamma and epsilon chains, while a peripheral stalk is formed by the delta and b chains.

It localises to the cell membrane. Functionally, f(1)F(0) ATP synthase produces ATP from ADP in the presence of a proton or sodium gradient. F-type ATPases consist of two structural domains, F(1) containing the extramembraneous catalytic core and F(0) containing the membrane proton channel, linked together by a central stalk and a peripheral stalk. During catalysis, ATP synthesis in the catalytic domain of F(1) is coupled via a rotary mechanism of the central stalk subunits to proton translocation. In terms of biological role, component of the F(0) channel, it forms part of the peripheral stalk, linking F(1) to F(0). The sequence is that of ATP synthase subunit b from Rubrobacter xylanophilus (strain DSM 9941 / JCM 11954 / NBRC 16129 / PRD-1).